We begin with the raw amino-acid sequence, 135 residues long: Endoribonuclease YbeY (135 aa).

Residues histidine 102, histidine 106, and histidine 112 each contribute to the Zn(2+) site.

The protein belongs to the endoribonuclease YbeY family. The cofactor is Zn(2+).

It localises to the cytoplasm. Its function is as follows. Single strand-specific metallo-endoribonuclease involved in late-stage 70S ribosome quality control and in maturation of the 3' terminus of the 16S rRNA. The chain is Endoribonuclease YbeY from Rubrobacter xylanophilus (strain DSM 9941 / JCM 11954 / NBRC 16129 / PRD-1).